The sequence spans 148 residues: Cytochrome c-type biogenesis protein CcmE (148 aa).

The Cytoplasmic portion of the chain corresponds to 1–7 (MKPRNRR). Residues 8 to 28 (IALIVAGLSALGIATALVLNA) traverse the membrane as a helical; Signal-anchor for type II membrane protein segment. Residues 29–148 (FQSNLVFFFT…VQKKPASRKP (120 aa)) are Periplasmic-facing. Heme is bound by residues His-123 and Tyr-127. Residues 128 to 148 (MPPEAQHALDEVQKKPASRKP) are disordered.

The protein belongs to the CcmE/CycJ family.

It is found in the cell inner membrane. Heme chaperone required for the biogenesis of c-type cytochromes. Transiently binds heme delivered by CcmC and transfers the heme to apo-cytochromes in a process facilitated by CcmF and CcmH. This Pseudomonas aeruginosa protein is Cytochrome c-type biogenesis protein CcmE.